Reading from the N-terminus, the 264-residue chain is MYPHVGVDASGLATLRATVKSAQDLLRGFVPTAYAVPALAAAAVPAGPCYALAEGSAVVGRRARSSSSGAAATTHRRPAADSDSARMMELVERAQAGEADAFGRLYDQYSDTVYRYIYYRVGGKATAEDLTSETFLRALRRIGTFTYQGRDFGAWLVTIARNLVADHFKSSRFRLEVTTGEMLDANEVERSPEDSVLESLSNAALLDAVRRLNPQQQECVTLRFLQGLSVAETARVMGKNEGAIKTLQYRAVRTLARLLPDDAR.

A not required for transcription in vitro region spans residues 1–87; that stretch reads MYPHVGVDAS…PAADSDSARM (87 aa). The tract at residues 64 to 83 is disordered; sequence RSSSSGAAATTHRRPAADSD. Positions 105–172 are sigma-70 factor domain-2; it reads LYDQYSDTVY…LVADHFKSSR (68 aa). Residues 129–132 carry the Polymerase core binding motif; the sequence is DLTS. The sigma-70 factor domain-4 stretch occupies residues 204 to 255; it reads ALLDAVRRLNPQQQECVTLRFLQGLSVAETARVMGKNEGAIKTLQYRAVRTL.

The protein belongs to the sigma-70 factor family. ECF subfamily. Post-translationally, two forms of protein exist; a 35 kDa form in early growth and a 28 kDa form seen in later stages (at protein level). In liquid culture the larger form accumulates to higher level than on solid media. The shorter form results from processing just upstream of Met-87; the exact position is unknown. There are 4 possible start codons; mutation of the first prevents protein production while mutation of the other 3 (Val-44, Met-87 and Met-88) permits production of both forms. Introduction of stop codons between the first and second, or second and third possible start codons also prevents protein production, corroborating that the annotated start codon is the correct one.

Functionally, sigma factors are initiation factors that promote the attachment of RNA polymerase to specific initiation sites and are then released. Extracytoplasmic function (ECF) sigma factors are usually held in an inactive form by an anti-sigma factor until released. ECF sigma factor involved in aerial mycelium formation, required for translation from the bldMp1 promoter. Expressed as a preprotein; processing and accumulation of the mature protein starts as aerial mycelium formation and sporulation commence. Activates expression of about 17 genes, including those for rdlA and most of the chaplins (chpA to chpH); chaplin activation is indirect. This Streptomyces coelicolor (strain ATCC BAA-471 / A3(2) / M145) protein is ECF RNA polymerase sigma factor BldN.